The following is a 103-amino-acid chain: Co-chaperonin GroES (103 aa).

Belongs to the GroES chaperonin family. As to quaternary structure, heptamer of 7 subunits arranged in a ring. Interacts with the chaperonin GroEL.

Its subcellular location is the cytoplasm. Functionally, together with the chaperonin GroEL, plays an essential role in assisting protein folding. The GroEL-GroES system forms a nano-cage that allows encapsulation of the non-native substrate proteins and provides a physical environment optimized to promote and accelerate protein folding. GroES binds to the apical surface of the GroEL ring, thereby capping the opening of the GroEL channel. The chain is Co-chaperonin GroES from Synechococcus sp. (strain CC9311).